Consider the following 156-residue polypeptide: SsrA-binding protein (156 aa).

It belongs to the SmpB family.

The protein localises to the cytoplasm. Its function is as follows. Required for rescue of stalled ribosomes mediated by trans-translation. Binds to transfer-messenger RNA (tmRNA), required for stable association of tmRNA with ribosomes. tmRNA and SmpB together mimic tRNA shape, replacing the anticodon stem-loop with SmpB. tmRNA is encoded by the ssrA gene; the 2 termini fold to resemble tRNA(Ala) and it encodes a 'tag peptide', a short internal open reading frame. During trans-translation Ala-aminoacylated tmRNA acts like a tRNA, entering the A-site of stalled ribosomes, displacing the stalled mRNA. The ribosome then switches to translate the ORF on the tmRNA; the nascent peptide is terminated with the 'tag peptide' encoded by the tmRNA and targeted for degradation. The ribosome is freed to recommence translation, which seems to be the essential function of trans-translation. This Thermoanaerobacter pseudethanolicus (strain ATCC 33223 / 39E) (Clostridium thermohydrosulfuricum) protein is SsrA-binding protein.